The sequence spans 61 residues: Large ribosomal subunit protein uL30 (61 aa).

Belongs to the universal ribosomal protein uL30 family. In terms of assembly, part of the 50S ribosomal subunit.

In Lactobacillus delbrueckii subsp. bulgaricus (strain ATCC 11842 / DSM 20081 / BCRC 10696 / JCM 1002 / NBRC 13953 / NCIMB 11778 / NCTC 12712 / WDCM 00102 / Lb 14), this protein is Large ribosomal subunit protein uL30.